A 240-amino-acid chain; its full sequence is Uridylate kinase (240 aa).

12–15 contacts ATP; sequence KLSG. Gly54 contacts UMP. Gly55 and Arg59 together coordinate ATP. UMP contacts are provided by residues Asp74 and 135 to 142; that span reads TGNPFFTT. The ATP site is built by Thr162, Tyr168, and Asp171.

It belongs to the UMP kinase family. Homohexamer.

It is found in the cytoplasm. The catalysed reaction is UMP + ATP = UDP + ADP. It functions in the pathway pyrimidine metabolism; CTP biosynthesis via de novo pathway; UDP from UMP (UMPK route): step 1/1. With respect to regulation, inhibited by UTP. Functionally, catalyzes the reversible phosphorylation of UMP to UDP. The protein is Uridylate kinase of Xanthomonas euvesicatoria pv. vesicatoria (strain 85-10) (Xanthomonas campestris pv. vesicatoria).